Consider the following 77-residue polypeptide: Large ribosomal subunit protein eL20 (77 aa).

This sequence belongs to the eukaryotic ribosomal protein eL20 family. In terms of assembly, part of the 50S ribosomal subunit. Binds 23S rRNA.

The protein is Large ribosomal subunit protein eL20 of Thermococcus kodakarensis (strain ATCC BAA-918 / JCM 12380 / KOD1) (Pyrococcus kodakaraensis (strain KOD1)).